The primary structure comprises 275 residues: Trans-aconitate 2-methyltransferase (275 aa).

It belongs to the methyltransferase superfamily. Tam family.

The protein localises to the cytoplasm. It carries out the reaction trans-aconitate + S-adenosyl-L-methionine = (E)-3-(methoxycarbonyl)pent-2-enedioate + S-adenosyl-L-homocysteine. Functionally, catalyzes the S-adenosylmethionine monomethyl esterification of trans-aconitate. This chain is Trans-aconitate 2-methyltransferase, found in Pseudomonas aeruginosa (strain UCBPP-PA14).